The primary structure comprises 399 residues: Aromatic-amino-acid aminotransferase (399 aa).

4 residues coordinate substrate: Gly36, Tyr67, Trp132, and Asn184. Residue Lys247 is modified to N6-(pyridoxal phosphate)lysine. Arg375 contacts substrate.

The protein belongs to the class-I pyridoxal-phosphate-dependent aminotransferase family. Homodimer. It depends on pyridoxal 5'-phosphate as a cofactor.

The protein resides in the cytoplasm. The enzyme catalyses an aromatic L-alpha-amino acid + 2-oxoglutarate = an aromatic oxo-acid + L-glutamate. The polypeptide is Aromatic-amino-acid aminotransferase (phhC) (Pseudomonas aeruginosa (strain ATCC 15692 / DSM 22644 / CIP 104116 / JCM 14847 / LMG 12228 / 1C / PRS 101 / PAO1)).